The sequence spans 101 residues: Small ribosomal subunit protein uS14 (101 aa).

The protein belongs to the universal ribosomal protein uS14 family. In terms of assembly, part of the 30S ribosomal subunit. Contacts proteins S3 and S10.

Functionally, binds 16S rRNA, required for the assembly of 30S particles and may also be responsible for determining the conformation of the 16S rRNA at the A site. In Burkholderia mallei (strain NCTC 10247), this protein is Small ribosomal subunit protein uS14.